A 144-amino-acid polypeptide reads, in one-letter code: Large ribosomal subunit protein uL15 (144 aa).

The tract at residues 1–54 (MRLNTLSPAAGAKHAPKRVGRGMGSGLGKTAGRGHKGQKSRSGGGVRPGFEGGQ) is disordered. 2 stretches are compositionally biased toward gly residues: residues 21 to 31 (RGMGSGLGKTA) and 42 to 52 (SGGGVRPGFEG).

This sequence belongs to the universal ribosomal protein uL15 family. Part of the 50S ribosomal subunit.

Functionally, binds to the 23S rRNA. The protein is Large ribosomal subunit protein uL15 of Shewanella oneidensis (strain ATCC 700550 / JCM 31522 / CIP 106686 / LMG 19005 / NCIMB 14063 / MR-1).